Reading from the N-terminus, the 176-residue chain is Translation initiation factor IF-3 (176 aa).

The protein belongs to the IF-3 family. As to quaternary structure, monomer.

Its subcellular location is the cytoplasm. Functionally, IF-3 binds to the 30S ribosomal subunit and shifts the equilibrium between 70S ribosomes and their 50S and 30S subunits in favor of the free subunits, thus enhancing the availability of 30S subunits on which protein synthesis initiation begins. In Streptococcus agalactiae serotype Ia (strain ATCC 27591 / A909 / CDC SS700), this protein is Translation initiation factor IF-3.